The sequence spans 221 residues: MAPYHIRQYQDSDHKSVVDVFTKGMEEHIPSTFRHMLMLPRTLLLLLGVPLALVLVSGSWLLAVVCIFFLLLLLRFLAGQPWKEYVATCLRTDMADITKSYLNAHGSFWVAESGNQVVGIVAALPVKDPPSGRKQLQLFRLSVSSQHRGQGIAKALVRTVLQFARDQGYTDVVLETSTLQQGAMTLYLGMGFQKTGQRFLTMFWRLVGIRTIQLKYPFPSA.

A helical transmembrane segment spans residues 53–73 (LVLVSGSWLLAVVCIFFLLLL). Residues 69-219 (FLLLLLRFLA…RTIQLKYPFP (151 aa)) form the N-acetyltransferase domain.

It belongs to the camello family.

The protein resides in the membrane. Functionally, may play a role in regulation of gastrulation. This Rattus norvegicus (Rat) protein is N-acetyltransferase 8F1.